The chain runs to 473 residues: Ribulose bisphosphate carboxylase large chain (473 aa).

Residues Asn116 and Thr166 each contribute to the substrate site. Residue Lys168 is the Proton acceptor of the active site. Lys170 contributes to the substrate binding site. Residues Lys194, Asp196, and Glu197 each coordinate Mg(2+). Residue Lys194 is modified to N6-carboxylysine. The active-site Proton acceptor is the His287. The substrate site is built by Arg288, His320, and Ser372.

It belongs to the RuBisCO large chain family. Type I subfamily. As to quaternary structure, heterohexadecamer of 8 large chains and 8 small chains. Requires Mg(2+) as cofactor.

The catalysed reaction is 2 (2R)-3-phosphoglycerate + 2 H(+) = D-ribulose 1,5-bisphosphate + CO2 + H2O. It catalyses the reaction D-ribulose 1,5-bisphosphate + O2 = 2-phosphoglycolate + (2R)-3-phosphoglycerate + 2 H(+). Its function is as follows. RuBisCO catalyzes two reactions: the carboxylation of D-ribulose 1,5-bisphosphate, the primary event in carbon dioxide fixation, as well as the oxidative fragmentation of the pentose substrate. Both reactions occur simultaneously and in competition at the same active site. This chain is Ribulose bisphosphate carboxylase large chain, found in Nitrosomonas europaea (strain ATCC 19718 / CIP 103999 / KCTC 2705 / NBRC 14298).